The primary structure comprises 455 residues: tRNA modification GTPase MnmE (455 aa).

Arginine 22 provides a ligand contact to (6S)-5-formyl-5,6,7,8-tetrahydrofolate. The interval arginine 43–glycine 67 is disordered. Residues glutamate 92 and arginine 132 each contribute to the (6S)-5-formyl-5,6,7,8-tetrahydrofolate site. One can recognise a TrmE-type G domain in the interval glycine 228–arginine 381. Position 238 (asparagine 238) interacts with K(+). GTP is bound by residues asparagine 238 to serine 243, serine 257 to threonine 263, and aspartate 282 to glycine 285. Mg(2+) is bound at residue serine 242. Serine 257, isoleucine 259, and threonine 262 together coordinate K(+). Residue threonine 263 participates in Mg(2+) binding. Lysine 455 serves as a coordination point for (6S)-5-formyl-5,6,7,8-tetrahydrofolate.

The protein belongs to the TRAFAC class TrmE-Era-EngA-EngB-Septin-like GTPase superfamily. TrmE GTPase family. In terms of assembly, homodimer. Heterotetramer of two MnmE and two MnmG subunits. K(+) serves as cofactor.

It is found in the cytoplasm. In terms of biological role, exhibits a very high intrinsic GTPase hydrolysis rate. Involved in the addition of a carboxymethylaminomethyl (cmnm) group at the wobble position (U34) of certain tRNAs, forming tRNA-cmnm(5)s(2)U34. This is tRNA modification GTPase MnmE from Rhodospirillum rubrum (strain ATCC 11170 / ATH 1.1.1 / DSM 467 / LMG 4362 / NCIMB 8255 / S1).